We begin with the raw amino-acid sequence, 488 residues long: Acetyl-coenzyme A carboxylase carboxyl transferase subunit beta, chloroplastic (488 aa).

A CoA carboxyltransferase N-terminal domain is found at 221–488; the sequence is LWIQCDNCYA…FFPLNKNEIK (268 aa). Zn(2+) is bound by residues Cys-225, Cys-228, Cys-244, and Cys-247. A C4-type zinc finger spans residues 225 to 247; sequence CDNCYALIYKKALKLKLNVCEQC.

The protein belongs to the AccD/PCCB family. Acetyl-CoA carboxylase is a heterohexamer composed of biotin carboxyl carrier protein, biotin carboxylase and 2 subunits each of ACCase subunit alpha and ACCase plastid-coded subunit beta (accD). It depends on Zn(2+) as a cofactor.

The protein localises to the plastid. The protein resides in the chloroplast stroma. It catalyses the reaction N(6)-carboxybiotinyl-L-lysyl-[protein] + acetyl-CoA = N(6)-biotinyl-L-lysyl-[protein] + malonyl-CoA. The protein operates within lipid metabolism; malonyl-CoA biosynthesis; malonyl-CoA from acetyl-CoA: step 1/1. Functionally, component of the acetyl coenzyme A carboxylase (ACC) complex. Biotin carboxylase (BC) catalyzes the carboxylation of biotin on its carrier protein (BCCP) and then the CO(2) group is transferred by the transcarboxylase to acetyl-CoA to form malonyl-CoA. The chain is Acetyl-coenzyme A carboxylase carboxyl transferase subunit beta, chloroplastic from Aethionema grandiflorum (Persian stone-cress).